Here is a 695-residue protein sequence, read N- to C-terminus: MANKREYPLAKTRNIGIMAHIDAGKTTATERILYYTGKIHKIGETHDGASQMDWMDEEKERGITITSAATTAVWKDNRINIIDTPGHVDFTVEVERALRVLDGAVTVLDAQAGVEPQTETVWRQADQFNVPRIVFANKMDKIGANFDYSVQTIKDRLNVTPLPIQMPIGAEDDFIGLVDLVKMVAYVYDEDKLGTNWDTVEIPDDMKEEAQKRHDEMVETLADIDDNLMEKYLEGEEISVDEIKAAIRKGTLEEQIFPVLAGSAYKDKGIQMMLDAVIDYLPSPIDVKPFVAHDADGNEIELTAGDDKPFAALAFKIATDPFVGRLTFLRVYTGSLQSGSYVLNATKDKRERIGRLLQMHSNQQQEIPEVFSGDIAAAIGLKNTTTGDSLTDPDHPLQLESMDFPEPVIQVSVEPKSKADQDKMDKGLQKLAEEDPTFKAETNPETGETLIAGMGELHLDIIVERLRREFHAEVTVGKPQVSYREAFTKTASAQGKFVRQSGGKGQYGDVWIEFTPLKEGEGFEFEDAIVGGVVPREFIPAVEQGLKEAMQNGVLAGYPLVDMHAKLYDGSYHEVDSSEAAFKVAASLALKNAAKKADPVILEPIMKVDIVVPQDNMGDVMGQVTARRGTIDGMEERGNAQLIHSFVPLSEMFGYATALRSATQGRGTFTMTFDHYSAVPKSVQEDIIKKNGGNN.

The region spanning 10–285 (AKTRNIGIMA…AVIDYLPSPI (276 aa)) is the tr-type G domain. GTP contacts are provided by residues 19 to 26 (AHIDAGKT), 83 to 87 (DTPGH), and 137 to 140 (NKMD).

The protein belongs to the TRAFAC class translation factor GTPase superfamily. Classic translation factor GTPase family. EF-G/EF-2 subfamily.

The protein localises to the cytoplasm. Catalyzes the GTP-dependent ribosomal translocation step during translation elongation. During this step, the ribosome changes from the pre-translocational (PRE) to the post-translocational (POST) state as the newly formed A-site-bound peptidyl-tRNA and P-site-bound deacylated tRNA move to the P and E sites, respectively. Catalyzes the coordinated movement of the two tRNA molecules, the mRNA and conformational changes in the ribosome. The protein is Elongation factor G of Limosilactobacillus reuteri (strain DSM 20016) (Lactobacillus reuteri).